We begin with the raw amino-acid sequence, 208 residues long: Large ribosomal subunit protein bL9 (208 aa).

The disordered stretch occupies residues 161-208; it reads KKRKIEKEVEEGSGTSVDESLKLDSVSDSIDTSGVNSSDKEEENNIIE. Positions 186 to 197 are enriched in polar residues; that stretch reads VSDSIDTSGVNS.

It belongs to the bacterial ribosomal protein bL9 family.

Its function is as follows. Binds to the 23S rRNA. The sequence is that of Large ribosomal subunit protein bL9 from Ehrlichia canis (strain Jake).